The chain runs to 765 residues: Cullin-5 (765 aa).

One can recognise a Cullin neddylation domain in the interval 696–757; the sequence is RELRVQEGIV…NKYMERRADD (62 aa). Lysine 709 is covalently cross-linked (Glycyl lysine isopeptide (Lys-Gly) (interchain with G-Cter in NEDD8)).

Belongs to the cullin family. In terms of assembly, interacts with rbx-1 and rbx-2. In terms of processing, neddylated; which enhances the ubiquitination activity of SCF-like complex.

Its pathway is protein modification; protein ubiquitination. Its function is as follows. Probable core component of cullin-based SCF-like E3 ubiquitin-protein ligase complexes which mediate the ubiquitination and subsequent proteasomal degradation of target proteins. In association with rbx-2 seems to be involved in meiotic cell cycle progression in the germline. Required for phosphorylation of the MAP kinase MPK-1 in the germline. This is Cullin-5 (cul-5) from Caenorhabditis elegans.